An 80-amino-acid polypeptide reads, in one-letter code: Protein P9 (80 aa).

As to quaternary structure, self-associates.

This Beta vulgaris (Sugar beet) protein is Protein P9.